Reading from the N-terminus, the 70-residue chain is uncharacterized protein (70 aa).

2 consecutive transmembrane segments (helical) span residues 13-33 (YYAF…LLGF) and 39-59 (QTYA…GLII).

Its subcellular location is the cell membrane. This is an uncharacterized protein from Escherichia coli O6:H1 (strain CFT073 / ATCC 700928 / UPEC).